Here is a 474-residue protein sequence, read N- to C-terminus: Serine/threonine-protein kinase VRK3 (474 aa).

A compositionally biased stretch (polar residues) spans 41–58; sequence HVSSFQGSKRGLNSSFET. Residues 41–152 are disordered; the sequence is HVSSFQGSKR…SRVTTSLEAL (112 aa). Residues 49-64 carry the Nuclear localization signal motif; it reads KRGLNSSFETSPKKVK. Residues Ser54, Ser55, Ser59, Ser82, Ser83, and Ser90 each carry the phosphoserine modification. The segment covering 88–101 has biased composition (low complexity); it reads TLSSSERSKGSGSR. The segment covering 107–149 has biased composition (polar residues); sequence SSPQKTRKSPQVTRGSPQKTSCSPQKTRQSPQTLKRSRVTTSL. At Ser108 the chain carries Phosphoserine; by CDK5. A phosphoserine mark is found at Ser115 and Ser122. A Protein kinase domain is found at 166 to 457; the sequence is WKLKSFQTRD…MLRNNLEALL (292 aa).

Belongs to the protein kinase superfamily. CK1 Ser/Thr protein kinase family. VRK subfamily. As to quaternary structure, interacts with DUSP3. Interacts with RAN. Interacts with HSP70/HSPA1A. Post-translationally, phosphorylated at Ser-108 by CDK5; leading to protection of the cell against H2O2-induced apoptosis. Ubiquitinated by RNF144A.

The protein resides in the nucleus. It is found in the cytoplasm. The catalysed reaction is L-seryl-[protein] + ATP = O-phospho-L-seryl-[protein] + ADP + H(+). Functionally, plays a role in the regulation of the cell cycle by phosphorylating the nuclear envelope protein barrier-to-autointegration factor/BAF that is required for disassembly and reassembly, respectively, of the nuclear envelope during mitosis. Under normal physiological conditions, negatively regulates ERK activity along with VHR/DUSP3 phosphatase in the nucleus, causing timely and transient action of ERK. Stress conditions activate CDK5 which phosphorylates VRK3 to increase VHR phosphatase activity and suppress prolonged ERK activation that causes cell death. For example, upon glutamate induction, promotes nuclear localization of HSP70/HSPA1A to inhibit ERK activation via VHR/DUSP3 phosphatase. This chain is Serine/threonine-protein kinase VRK3 (VRK3), found in Homo sapiens (Human).